A 261-amino-acid polypeptide reads, in one-letter code: Acyl-[acyl-carrier-protein]--UDP-N-acetylglucosamine O-acyltransferase (261 aa).

It belongs to the transferase hexapeptide repeat family. LpxA subfamily. As to quaternary structure, homotrimer.

The protein localises to the cytoplasm. It catalyses the reaction a (3R)-hydroxyacyl-[ACP] + UDP-N-acetyl-alpha-D-glucosamine = a UDP-3-O-[(3R)-3-hydroxyacyl]-N-acetyl-alpha-D-glucosamine + holo-[ACP]. The protein operates within glycolipid biosynthesis; lipid IV(A) biosynthesis; lipid IV(A) from (3R)-3-hydroxytetradecanoyl-[acyl-carrier-protein] and UDP-N-acetyl-alpha-D-glucosamine: step 1/6. Its function is as follows. Involved in the biosynthesis of lipid A, a phosphorylated glycolipid that anchors the lipopolysaccharide to the outer membrane of the cell. The protein is Acyl-[acyl-carrier-protein]--UDP-N-acetylglucosamine O-acyltransferase of Trichlorobacter lovleyi (strain ATCC BAA-1151 / DSM 17278 / SZ) (Geobacter lovleyi).